The primary structure comprises 512 residues: Sucrose-6-phosphate hydrolase (512 aa).

Substrate-binding positions include 40-43, Q59, W67, 102-103, 165-166, E229, and W311; these read WMND, FS, and RD. D43 is an active-site residue.

It belongs to the glycosyl hydrolase 32 family.

The protein resides in the cytoplasm. The catalysed reaction is Hydrolysis of terminal non-reducing beta-D-fructofuranoside residues in beta-D-fructofuranosides.. The protein operates within glycan biosynthesis; sucrose metabolism. The sequence is that of Sucrose-6-phosphate hydrolase (sacA) from Zymomonas mobilis subsp. mobilis (strain ATCC 31821 / ZM4 / CP4).